The primary structure comprises 23 residues: Basic phospholipase A2 homolog CTs-K49c (23 aa).

Contains 7 disulfide bonds. As to expression, expressed by the venom gland.

It is found in the secreted. Snake venom phospholipase A2 homolog that lacks catalytic activity. Shows myotoxic activities. Induces local edema a few hours after injection (5-10 ug) in the hind paw. In Trimeresurus stejnegeri (Chinese green tree viper), this protein is Basic phospholipase A2 homolog CTs-K49c.